The chain runs to 378 residues: Formate dehydrogenase 2, mitochondrial (378 aa).

A mitochondrion-targeting transit peptide spans 1–18 (MAMWRAPSAAGQLLGRAL). The substrate site is built by V122 and N146. Residues T147, 201 to 202 (RI), D221, 256 to 260 (PLTEK), N282, D308, and 332 to 335 (HCSG) contribute to the NAD(+) site.

The protein belongs to the D-isomer specific 2-hydroxyacid dehydrogenase family. FDH subfamily. Homodimer.

The protein resides in the mitochondrion. It catalyses the reaction formate + NAD(+) = CO2 + NADH. Catalyzes the NAD(+)-dependent oxidation of formate to carbon dioxide. Involved in the cell stress response. This Oryza sativa subsp. japonica (Rice) protein is Formate dehydrogenase 2, mitochondrial.